The sequence spans 334 residues: Malate dehydrogenase, mitochondrial (334 aa).

The transit peptide at 1–17 (MLSRVAKRAFSSTVANP) directs the protein to the mitochondrion. NAD(+) is bound by residues 24-30 (GAGGGIG) and Asp50. Positions 99 and 105 each coordinate substrate. NAD(+) is bound by residues Asn112 and 135-137 (ISN). Substrate-binding residues include Asn137 and Arg171. At Ser177 the chain carries Phosphoserine. The active-site Proton acceptor is His195. Thr199 is modified (phosphothreonine). Met245 serves as a coordination point for NAD(+).

This sequence belongs to the LDH/MDH superfamily. MDH type 1 family. As to quaternary structure, homodimer.

Its subcellular location is the mitochondrion matrix. It carries out the reaction (S)-malate + NAD(+) = oxaloacetate + NADH + H(+). This chain is Malate dehydrogenase, mitochondrial (MDH1), found in Saccharomyces cerevisiae (strain ATCC 204508 / S288c) (Baker's yeast).